The sequence spans 561 residues: Small ribosomal subunit protein bS1 (561 aa).

S1 motif domains are found at residues 22–88 (GEVI…LSRE), 106–172 (GDIL…VSRR), 193–261 (GSVI…LGMK), 278–348 (GTRL…LGMK), 365–435 (GDKI…LGIK), and 452–521 (GSLV…LSVK).

The protein belongs to the bacterial ribosomal protein bS1 family.

Binds mRNA; thus facilitating recognition of the initiation point. It is needed to translate mRNA with a short Shine-Dalgarno (SD) purine-rich sequence. This chain is Small ribosomal subunit protein bS1 (rpsA), found in Neisseria meningitidis serogroup B (strain ATCC BAA-335 / MC58).